Here is a 42-residue protein sequence, read N- to C-terminus: Large ribosomal subunit protein bL36 (42 aa).

This sequence belongs to the bacterial ribosomal protein bL36 family.

This Ehrlichia canis (strain Jake) protein is Large ribosomal subunit protein bL36.